A 414-amino-acid chain; its full sequence is 2,3-diketo-5-methylthiopentyl-1-phosphate enolase (414 aa).

The active-site Proton acceptor is lysine 99. Residues lysine 148, 174 to 177 (KDDE), histidine 265, glycine 338, and 360 to 361 (GG) contribute to the substrate site. Mg(2+) is bound by residues lysine 174, aspartate 176, and glutamate 177. N6-carboxylysine is present on lysine 174.

It belongs to the RuBisCO large chain family. Type IV subfamily. In terms of assembly, homodimer. Mg(2+) serves as cofactor.

It catalyses the reaction 5-methylsulfanyl-2,3-dioxopentyl phosphate = 2-hydroxy-5-methylsulfanyl-3-oxopent-1-enyl phosphate. Its pathway is amino-acid biosynthesis; L-methionine biosynthesis via salvage pathway; L-methionine from S-methyl-5-thio-alpha-D-ribose 1-phosphate: step 3/6. In terms of biological role, catalyzes the enolization of 2,3-diketo-5-methylthiopentyl-1-phosphate (DK-MTP-1-P) into 2-hydroxy-3-keto-5-methylthiopentenyl-1-phosphate (HK-MTPenyl-1-P). The chain is 2,3-diketo-5-methylthiopentyl-1-phosphate enolase from Bacillus thuringiensis (strain Al Hakam).